The primary structure comprises 497 residues: Cytochrome P450 26A1 (497 aa).

Heme is bound at residue Cys442.

It belongs to the cytochrome P450 family. The cofactor is heme.

The protein resides in the endoplasmic reticulum membrane. It is found in the microsome membrane. It catalyses the reaction all-trans-retinoate + reduced [NADPH--hemoprotein reductase] + O2 = all-trans-(4S)-hydroxyretinoate + oxidized [NADPH--hemoprotein reductase] + H2O + H(+). The catalysed reaction is all-trans-(4S)-hydroxyretinoate + reduced [NADPH--hemoprotein reductase] + O2 = all-trans-(4S,16)-dihydroxyretinoate + oxidized [NADPH--hemoprotein reductase] + H2O + H(+). The enzyme catalyses all-trans-retinoate + reduced [NADPH--hemoprotein reductase] + O2 = all-trans-18-hydroxyretinoate + oxidized [NADPH--hemoprotein reductase] + H2O + H(+). A cytochrome P450 monooxygenase involved in the metabolism of retinoates (RAs), the active metabolites of vitamin A, and critical signaling molecules in animals. RAs exist as at least four different isomers: all-trans-RA (atRA), 9-cis-RA, 13-cis-RA, and 9,13-dicis-RA, where atRA is considered to be the biologically active isomer, although 9-cis-RA and 13-cis-RA also have activity. Catalyzes the hydroxylation of atRA primarily at C-4 and C-18, thereby contributing to the regulation of atRA homeostasis and signaling. Hydroxylation of atRA limits its biological activity and initiates a degradative process leading to its eventual elimination. Involved in the convertion of atRA to all-trans-4-oxo-RA. Able to metabolize other RAs such as 9-cis, 13-cis and 9,13-di-cis RA. Can oxidize all-trans-13,14-dihydroretinoate (DRA) to metabolites which could include all-trans-4-oxo-DRA, all-trans-4-hydroxy-DRA, all-trans-5,8-epoxy-DRA, and all-trans-18-hydroxy-DRA. May play a role in the oxidative metabolism of xenobiotics such as tazarotenic acid. In Mus musculus (Mouse), this protein is Cytochrome P450 26A1.